A 310-amino-acid polypeptide reads, in one-letter code: Repression factor of MSEs protein 1 (310 aa).

Disordered regions lie at residues threonine 83 to alanine 155 and aspartate 192 to glutamate 230. Positions arginine 92 to serine 106 are enriched in low complexity. Polar residues predominate over residues alanine 107–proline 120. Residues serine 127–alanine 136 show a composition bias toward basic residues. The span at arginine 139 to alanine 155 shows a compositional bias: polar residues. The span at aspartate 192–arginine 208 shows a compositional bias: basic and acidic residues. The residue at position 215 (serine 215) is a Phosphoserine.

Interacts directly with HST1 and SUM1. Required for the interaction between HST1 and SUM1.

The protein localises to the nucleus. In terms of biological role, tethering factor required for histone deacetylase HST1-mediated repression. Probably involved in targeting HST1 to a subset of SUM1-regulated genes. In Saccharomyces cerevisiae (strain ATCC 204508 / S288c) (Baker's yeast), this protein is Repression factor of MSEs protein 1 (RFM1).